The sequence spans 679 residues: Genome polyprotein (679 aa).

Residues 1–14 constitute a propeptide, ER anchor for the capsid protein C, removed in mature form by serine protease NS3; that stretch reads SAGMIIMLIPTVMA. Residues 2–22 traverse the membrane as a helical segment; that stretch reads AGMIIMLIPTVMAFHLTTRNG. At 23-138 the chain is on the extracellular side; that stretch reads EPHMIVSRQE…GAWKHAQRIE (116 aa). N-linked (GlcNAc...) asparagine; by host glycosylation is present at N83. A helical transmembrane segment spans residues 139–159; it reads IWILRHPGFTIMAAILAYTIG. At 160–165 the chain is on the cytoplasmic side; it reads TTHFQR. Residues 166 to 180 traverse the membrane as a helical segment; it reads ALIFILLTAVAPSMT. The Extracellular segment spans residues 181–625; it reads MRCIGISNRD…LHQVFGAIYG (445 aa). 4 disulfides stabilise this stretch: C183-C210, C240-C301, C254-C285, and C272-C296. N247 carries N-linked (GlcNAc...) asparagine; by host glycosylation. The fusion peptide stretch occupies residues 278 to 291; it reads DRGWGNGCGLFGKG. A glycan (N-linked (GlcNAc...) asparagine; by host) is linked at N333. 2 cysteine pairs are disulfide-bonded: C365/C465 and C482/C513. The chain crosses the membrane as a helical span at residues 626–646; the sequence is AAFSGVSWTMKILIGVIITWI. Over 647–652 the chain is Cytoplasmic; sequence GMNSRS. Residues 653–673 form a helical membrane-spanning segment; sequence TSLSVSLVLVGIVTLYLGVMV. The Extracellular segment spans residues 674–679; it reads QADSGC.

As to quaternary structure, forms heterodimers with envelope protein E in the endoplasmic reticulum and Golgi. In terms of assembly, homodimer; in the endoplasmic reticulum and Golgi. Interacts with protein prM. Interacts with non-structural protein 1. Post-translationally, cleaved in post-Golgi vesicles by a host furin, releasing the mature small envelope protein M, and peptide pr. This cleavage is incomplete as up to 30% of viral particles still carry uncleaved prM. In terms of processing, N-glycosylated. N-glycosylated. The excreted form is glycosylated and this is required for efficient secretion of the protein from infected cells. Post-translationally, specific enzymatic cleavages in vivo yield mature proteins. Cleavages in the lumen of endoplasmic reticulum are performed by host signal peptidase, wereas cleavages in the cytoplasmic side are performed by serine protease NS3. Signal cleavage at the 2K-4B site requires a prior NS3 protease-mediated cleavage at the 4A-2K site.

It localises to the secreted. It is found in the virion membrane. Its subcellular location is the host endoplasmic reticulum membrane. In terms of biological role, prevents premature fusion activity of envelope proteins in trans-Golgi by binding to envelope protein E at pH6.0. After virion release in extracellular space, gets dissociated from E dimers. Functionally, acts as a chaperone for envelope protein E during intracellular virion assembly by masking and inactivating envelope protein E fusion peptide. prM is the only viral peptide matured by host furin in the trans-Golgi network probably to avoid catastrophic activation of the viral fusion activity in acidic Golgi compartment prior to virion release. prM-E cleavage is inefficient, and many virions are only partially matured. These uncleaved prM would play a role in immune evasion. Its function is as follows. May play a role in virus budding. Exerts cytotoxic effects by activating a mitochondrial apoptotic pathway through M ectodomain. May display a viroporin activity. Binds to host cell surface receptor and mediates fusion between viral and cellular membranes. Envelope protein is synthesized in the endoplasmic reticulum in the form of heterodimer with protein prM. They play a role in virion budding in the ER, and the newly formed immature particle is covered with 60 spikes composed of heterodimer between precursor prM and envelope protein E. The virion is transported to the Golgi apparatus where the low pH causes dissociation of PrM-E heterodimers and formation of E homodimers. prM-E cleavage is inefficient, and many virions are only partially matured. These uncleaved prM would play a role in immune evasion. In terms of biological role, involved in immune evasion, pathogenesis and viral replication. Once cleaved off the polyprotein, is targeted to three destinations: the viral replication cycle, the plasma membrane and the extracellular compartment. Essential for viral replication. Required for formation of the replication complex and recruitment of other non-structural proteins to the ER-derived membrane structures. Excreted as a hexameric lipoparticle that plays a role against host immune response. Antagonizing the complement function. Binds to the host macrophages and dendritic cells. Inhibits signal transduction originating from Toll-like receptor 3 (TLR3). Functionally, disrupts the host endothelial glycocalyx layer of host pulmonary microvascular endothelial cells, inducing degradation of sialic acid and shedding of heparan sulfate proteoglycans. NS1 induces expression of sialidases, heparanase, and activates cathepsin L, which activates heparanase via enzymatic cleavage. These effects are probably linked to the endothelial hyperpermeability observed in severe dengue disease. This Dengue virus type 2 (strain Thailand/PUO-218/1980) (DENV-2) protein is Genome polyprotein.